A 278-amino-acid polypeptide reads, in one-letter code: Putative pyruvate, phosphate dikinase regulatory protein (278 aa).

156 to 163 is an ADP binding site; that stretch reads GVSRTSKT.

Belongs to the pyruvate, phosphate/water dikinase regulatory protein family. PDRP subfamily.

It carries out the reaction N(tele)-phospho-L-histidyl/L-threonyl-[pyruvate, phosphate dikinase] + ADP = N(tele)-phospho-L-histidyl/O-phospho-L-threonyl-[pyruvate, phosphate dikinase] + AMP + H(+). The catalysed reaction is N(tele)-phospho-L-histidyl/O-phospho-L-threonyl-[pyruvate, phosphate dikinase] + phosphate + H(+) = N(tele)-phospho-L-histidyl/L-threonyl-[pyruvate, phosphate dikinase] + diphosphate. In terms of biological role, bifunctional serine/threonine kinase and phosphorylase involved in the regulation of the pyruvate, phosphate dikinase (PPDK) by catalyzing its phosphorylation/dephosphorylation. This Lactobacillus acidophilus (strain ATCC 700396 / NCK56 / N2 / NCFM) protein is Putative pyruvate, phosphate dikinase regulatory protein.